The sequence spans 366 residues: Chalcone synthase B (366 aa).

Cys172 is a catalytic residue.

Belongs to the thiolase-like superfamily. Chalcone/stilbene synthases family.

It carries out the reaction (E)-4-coumaroyl-CoA + 3 malonyl-CoA + 3 H(+) = 2',4,4',6'-tetrahydroxychalcone + 3 CO2 + 4 CoA. Its pathway is secondary metabolite biosynthesis; flavonoid biosynthesis. In terms of biological role, the primary product of this enzyme is 4,2',4',6'-tetrahydroxychalcone (also termed naringenin-chalcone or chalcone) which can under specific conditions spontaneously isomerize into naringenin. The polypeptide is Chalcone synthase B (CHSB) (Ipomoea triloba (Trilobed morning glory)).